The sequence spans 124 residues: Small ribosomal subunit protein uS12 (124 aa).

At Asp-89 the chain carries 3-methylthioaspartic acid.

It belongs to the universal ribosomal protein uS12 family. As to quaternary structure, part of the 30S ribosomal subunit. Contacts proteins S8 and S17. May interact with IF1 in the 30S initiation complex.

Functionally, with S4 and S5 plays an important role in translational accuracy. In terms of biological role, interacts with and stabilizes bases of the 16S rRNA that are involved in tRNA selection in the A site and with the mRNA backbone. Located at the interface of the 30S and 50S subunits, it traverses the body of the 30S subunit contacting proteins on the other side and probably holding the rRNA structure together. The combined cluster of proteins S8, S12 and S17 appears to hold together the shoulder and platform of the 30S subunit. This chain is Small ribosomal subunit protein uS12, found in Thermoanaerobacter pseudethanolicus (strain ATCC 33223 / 39E) (Clostridium thermohydrosulfuricum).